A 1033-amino-acid chain; its full sequence is Isoleucine--tRNA ligase (1033 aa).

The short motif at 47–57 (PTANGLPHVGH) is the 'HIGH' region element. A 'KMSKS' region motif is present at residues 590–594 (KMSKS). Lysine 593 provides a ligand contact to ATP.

Belongs to the class-I aminoacyl-tRNA synthetase family. IleS type 2 subfamily. Monomer. The cofactor is Zn(2+).

The protein localises to the cytoplasm. The catalysed reaction is tRNA(Ile) + L-isoleucine + ATP = L-isoleucyl-tRNA(Ile) + AMP + diphosphate. Its function is as follows. Catalyzes the attachment of isoleucine to tRNA(Ile). As IleRS can inadvertently accommodate and process structurally similar amino acids such as valine, to avoid such errors it has two additional distinct tRNA(Ile)-dependent editing activities. One activity is designated as 'pretransfer' editing and involves the hydrolysis of activated Val-AMP. The other activity is designated 'posttransfer' editing and involves deacylation of mischarged Val-tRNA(Ile). In Bacillus thuringiensis (strain Al Hakam), this protein is Isoleucine--tRNA ligase.